The primary structure comprises 404 residues: Cysteine desulfurase IscS (404 aa).

Residues 75-76 (AT), Asn-155, Gln-183, and 203-205 (SGH) contribute to the pyridoxal 5'-phosphate site. Lys-206 carries the post-translational modification N6-(pyridoxal phosphate)lysine. Thr-243 is a pyridoxal 5'-phosphate binding site. The active-site Cysteine persulfide intermediate is Cys-328. [2Fe-2S] cluster is bound at residue Cys-328.

It belongs to the class-V pyridoxal-phosphate-dependent aminotransferase family. NifS/IscS subfamily. As to quaternary structure, homodimer. Forms a heterotetramer with IscU, interacts with other sulfur acceptors. Pyridoxal 5'-phosphate is required as a cofactor.

The protein localises to the cytoplasm. The enzyme catalyses (sulfur carrier)-H + L-cysteine = (sulfur carrier)-SH + L-alanine. It functions in the pathway cofactor biosynthesis; iron-sulfur cluster biosynthesis. In terms of biological role, master enzyme that delivers sulfur to a number of partners involved in Fe-S cluster assembly, tRNA modification or cofactor biosynthesis. Catalyzes the removal of elemental sulfur atoms from cysteine to produce alanine. Functions as a sulfur delivery protein for Fe-S cluster synthesis onto IscU, an Fe-S scaffold assembly protein, as well as other S acceptor proteins. The polypeptide is Cysteine desulfurase IscS (Shewanella sp. (strain MR-4)).